The chain runs to 347 residues: MSDRKQALDMALRQIEKQFGKGSIMKMGENEIPKIATIPSGSLALDVALGIGGYPRGRVVEIYGPESSGKTTVALHAIAEAQKQGGQAAFIDAEHALDPVYAKALGVNIDELLLSQPDTGEQALEIAEALVRSGAVDIIVVDSVAALVPKAEIEGEMGDSHVGLQARLMSQALRKLSGAINKSKTTAIFINQIREKVGVMFGNPETTPGGRALKFYSSVRLEVRRAETLKLGNDAVGNKARIKVVKNKVAPPFKQAEVDIMYGKGISKEGEVLDIGSDLDIVMKSGAWYSYNNDRLGQGRENAKQYLKEHEEVLTEIHQSIRQHYELDKVDEDKTEEEASQESLDLK.

64-71 lines the ATP pocket; that stretch reads GPESSGKT. The interval 328-347 is disordered; it reads DKVDEDKTEEEASQESLDLK.

It belongs to the RecA family.

It is found in the cytoplasm. In terms of biological role, can catalyze the hydrolysis of ATP in the presence of single-stranded DNA, the ATP-dependent uptake of single-stranded DNA by duplex DNA, and the ATP-dependent hybridization of homologous single-stranded DNAs. It interacts with LexA causing its activation and leading to its autocatalytic cleavage. The sequence is that of Protein RecA from Oceanobacillus iheyensis (strain DSM 14371 / CIP 107618 / JCM 11309 / KCTC 3954 / HTE831).